Reading from the N-terminus, the 629-residue chain is ATP-dependent DNA helicase II subunit 2 (629 aa).

A Ku domain is found at 254–476 (SGLNRKTAVE…GHQIDELMEQ (223 aa)). A compositionally biased stretch (basic and acidic residues) spans 608–620 (DLETLLKRGEQHS). The interval 608–629 (DLETLLKRGEQHSRGSPNNSNN) is disordered.

Belongs to the ku80 family. Heterodimer of YKU70/HDF1 and YKU80/HDF2. Interacts with SIR4.

The protein resides in the nucleus. It is found in the chromosome. It localises to the telomere. The enzyme catalyses ATP + H2O = ADP + phosphate + H(+). In terms of biological role, single-stranded DNA-dependent ATP-dependent helicase. Involved in non-homologous end joining (NHEJ) DNA double strand break repair. DNA-binding is sequence-independent but has a high affinity to nicks in double-stranded DNA and to the ends of duplex DNA. Binds to naturally occurring chromosomal ends, and therefore provides chromosomal end protection. Appears to have a role in recruitment of telomerase and CDC13 to the telomere and the subsequent telomere elongation. Required also for telomere recombination to repair telomeric ends in the absence of telomerase. KU70, of the KU70/KU80 heterodimer, binds to the stem loop of TLC1, the RNA component of telomerase. Involved in telomere maintenance. Interacts with telomeric repeats and subtelomeric sequences thereby controlling telomere length and protecting against subtelomeric rearrangement. Maintains telomeric chromatin, which is involved in silencing the expression of genes located at the telomere. Required for mating-type switching. The chain is ATP-dependent DNA helicase II subunit 2 (YKU80) from Saccharomyces cerevisiae (strain ATCC 204508 / S288c) (Baker's yeast).